A 398-amino-acid chain; its full sequence is MEEYQHDNSTTPQRVSFLYSPISSSNKNDNTSDTNNNNNNNNSSNYGPGYNNTNNNNHHHQHMLFPHMSSLLPQTTENCFRSDHDQPNNNNNPSVKSEASSSRINHYSMLMRAIHNTQEANNNNNDNVSDVEAMKAKIIAHPHYSTLLQAYLDCQKIGAPPDVVDRITAARQDFEARQQRSTPSVSASSRDPELDQFMEAYCDMLVKYREELTRPIQEAMEFIRRIESQLSMLCQSPIHILNNPDGKSDNMGSSDEEQENNSGGETELPEIDPRAEDRELKNHLLKKYSGYLSSLKQELSKKKKKGKLPKEARQKLLTWWELHYKWPYPSESEKVALAESTGLDQKQINNWFINQRKRHWKPSEDMQFMVMDGLQHPHHAALYMDGHYMGDGPYRLGP.

3 disordered regions span residues 20 to 61, 78 to 102, and 241 to 273; these read SPIS…HHHQ, NCFR…ASSS, and LNNP…EIDP. The segment covering 23 to 56 has biased composition (low complexity); that stretch reads SSSNKNDNTSDTNNNNNNNNSSNYGPGYNNTNNN. Residues 87–102 are compositionally biased toward polar residues; that stretch reads PNNNNNPSVKSEASSS. The ELK domain occupies 279–299; it reads ELKNHLLKKYSGYLSSLKQEL. Residues 300-363 constitute a DNA-binding region (homeobox; TALE-type); that stretch reads SKKKKKGKLP…NQRKRHWKPS (64 aa).

It belongs to the TALE/KNOX homeobox family. May form heterodimeric complex with the TALE/BELL proteins BEL1, BLH2, BLH8/PNF and BLH9/PNY. Interacts with OFP1, OFP2, OFP4, OFP6 and OFP12. Interacts with CCT7 and CCT8. Interacts with KNATM-B. Binds to AGO10/PNH. Interacts with BZIP30. In terms of tissue distribution, expressed in the vegetative meristem. Present in the base of flower primordia.

Its subcellular location is the nucleus. Functionally, may play a role in meristem function, and may be involved in maintaining cells in an undifferentiated, meristematic state, and its expression disappears at the same time the shoot apex undergoes the transition from vegetative to reproductive development. Positive regulator of LATERAL ORGAN BOUNDARIES (LOB). Probably binds to the DNA sequence 5'-TGAC-3'. Able to traffic from the L1 to the L2/L3 layers of the meristem, presumably through plasmodesmata. The protein is Homeobox protein knotted-1-like 1 (KNAT1) of Arabidopsis thaliana (Mouse-ear cress).